A 170-amino-acid polypeptide reads, in one-letter code: Two-component response regulator ORR6 (170 aa).

The Response regulatory domain maps to 51–170 (HVLAVDDSSV…DVSRLCSRIR (120 aa)). 4-aspartylphosphate is present on aspartate 103.

Belongs to the ARR family. Type-A subfamily. Two-component system major event consists of a His-to-Asp phosphorelay between a sensor histidine kinase (HK) and a response regulator (RR). In plants, the His-to-Asp phosphorelay involves an additional intermediate named Histidine-containing phosphotransfer protein (HPt). This multistep phosphorelay consists of a His-Asp-His-Asp sequential transfer of a phosphate group between first a His and an Asp of the HK protein, followed by the transfer to a conserved His of the HPt protein and finally the transfer to an Asp in the receiver domain of the RR protein. As to expression, expressed in roots, leaf blades, leaf sheaths, shoot apex, flowers and panicles.

Functions as a response regulator involved in His-to-Asp phosphorelay signal transduction system. Phosphorylation of the Asp residue in the receiver domain activates the ability of the protein to promote the transcription of target genes. Type-A response regulators seem to act as negative regulators of the cytokinin signaling. The chain is Two-component response regulator ORR6 from Oryza sativa subsp. japonica (Rice).